A 2694-amino-acid chain; its full sequence is Neurobeachin-like protein 1 (2694 aa).

3 disordered regions span residues 1289–1314 (VLMK…TDEE), 1330–1350 (SLED…DSSV), and 1381–1411 (CEMS…SVHS). Residues 1290–1314 (LMKDNDKNMSTEDTKKNSDEKTDEE) are compositionally biased toward basic and acidic residues. Residues 1383 to 1409 (MSDSGSQVPDSLPSTPSPVESTKSFSV) show a composition bias toward polar residues. The 98-residue stretch at 1883–1980 (DQKEKLVLME…VRNKIYSRLL (98 aa)) folds into the BEACH-type PH domain. One can recognise a BEACH domain in the interval 1992 to 2284 (RSPQELFKAS…QLLKEPHPPR (293 aa)). WD repeat units lie at residues 2439–2478 (RHMD…GVPV) and 2490–2531 (GHTN…RTLR).

It belongs to the WD repeat neurobeachin family. In terms of tissue distribution, highly expressed in brain, kidney, prostate and testis. Weakly expressed in ovary, small intestine, colon and peripheral blood leukocytes. May be correlative to several tumors, such as ovary serous adenocarcinoma and metastasis mammary gland carcinoma breast.

This chain is Neurobeachin-like protein 1 (NBEAL1), found in Homo sapiens (Human).